The primary structure comprises 159 residues: Cell number regulator 4 (159 aa).

A helical transmembrane segment spans residues 52–74 (LAGLLYCLLLHAGVAVVPCHCIY).

It belongs to the cornifelin family. In terms of tissue distribution, expressed in roots, coleoptiles, leaves, stalks, apical meristems, immature ears, endosperm, pericarp and tassel spikelets.

Its subcellular location is the membrane. The chain is Cell number regulator 4 (CNR4) from Zea mays (Maize).